The following is a 413-amino-acid chain: uncharacterized protein (413 aa).

12 helical membrane-spanning segments follow: residues 42–62 (FLGG…LPVF), 75–95 (LSLS…GPLS), 109–129 (LIAA…VIVF), 133–153 (LTGL…VEEV), 157–179 (SVSF…GRIL), 191–211 (IAFI…LYFL), 238–258 (PTLL…ITIF), 265–285 (LMLS…IIYL), 304–324 (SSIL…TQYN), 326–346 (IFII…SHSI), 362–382 (ATSL…TFGG), and 383–403 (FFWF…ILIF).

Belongs to the major facilitator superfamily.

The protein localises to the cell membrane. This is an uncharacterized protein from Buchnera aphidicola subsp. Schizaphis graminum (strain Sg).